The sequence spans 943 residues: TBC1 domain family member 2B (943 aa).

The segment at 1 to 29 (MPGVEDPCDSQGTPPEEPSTSVAPGEAAK) is disordered. Residues 10 to 22 (SQGTPPEEPSTSV) are compositionally biased toward polar residues. In terms of domain architecture, PH spans 32-129 (SPRLCGYLAK…WLQELQQKRW (98 aa)). Residues 315-514 (RMESDVLLKL…ARYSNLEAKM (200 aa)) are a coiled coil. The Rab-GAP TBC domain occupies 642–836 (GIPHEHRSRM…RIWDSLLYEG (195 aa)).

The protein resides in the early endosome. Functionally, GTPase-activating protein that plays a role in the early steps of endocytosis. This is TBC1 domain family member 2B (tbc1d2b) from Xenopus tropicalis (Western clawed frog).